The chain runs to 166 residues: Probable chemoreceptor glutamine deamidase CheD (166 aa).

It belongs to the CheD family.

The enzyme catalyses L-glutaminyl-[protein] + H2O = L-glutamyl-[protein] + NH4(+). In terms of biological role, probably deamidates glutamine residues to glutamate on methyl-accepting chemotaxis receptors (MCPs), playing an important role in chemotaxis. The protein is Probable chemoreceptor glutamine deamidase CheD of Clostridium acetobutylicum (strain ATCC 824 / DSM 792 / JCM 1419 / IAM 19013 / LMG 5710 / NBRC 13948 / NRRL B-527 / VKM B-1787 / 2291 / W).